The following is a 706-amino-acid chain: Amino-acid acetyltransferase, mitochondrial (706 aa).

Disordered regions lie at residues 1-25 and 367-403; these read MSSRVLASRAAQPLKRHPTVVGAGD and NPANNSQGESVVTNPISDSNAVSESASTEPTSTPAKQ. The N-terminal 35 residues, 1–35, are a transit peptide targeting the mitochondrion; that stretch reads MSSRVLASRAAQPLKRHPTVVGAGDEAYPTPRRCF. Residues 367–388 are compositionally biased toward polar residues; it reads NPANNSQGESVVTNPISDSNAV. The segment covering 389-401 has biased composition (low complexity); sequence SESASTEPTSTPA. The region spanning 527-696 is the N-acetyltransferase domain; that stretch reads TRPNMNLDDP…YEAVCRSIQP (170 aa).

The protein belongs to the acetyltransferase family.

It is found in the mitochondrion. The enzyme catalyses L-glutamate + acetyl-CoA = N-acetyl-L-glutamate + CoA + H(+). The protein operates within amino-acid biosynthesis; L-arginine biosynthesis; N(2)-acetyl-L-ornithine from L-glutamate: step 1/4. Functionally, N-acetylglutamate synthase involved in arginine biosynthesis. This chain is Amino-acid acetyltransferase, mitochondrial (arg2), found in Emericella nidulans (strain FGSC A4 / ATCC 38163 / CBS 112.46 / NRRL 194 / M139) (Aspergillus nidulans).